Consider the following 477-residue polypeptide: Homeobox protein Meis2 (477 aa).

Residues 71–191 form a required for interaction with PBX1 region; the sequence is DALKRDKDAI…KMPIDLVIDE (121 aa). In terms of domain architecture, MEIS N-terminal spans 110 to 193; it reads GGDVCSSDSF…PIDLVIDERD (84 aa). Positions 193-203 are enriched in basic and acidic residues; it reads DGSSKSDHEEL. A disordered region spans residues 193 to 283; it reads DGSSKSDHEE…KKRQKKRGIF (91 aa). Composition is skewed to polar residues over residues 204-217 and 239-251; these read SGSS…NPSS and GHAS…SSEQ. The segment at residues 276 to 338 is a DNA-binding region (homeobox; TALE-type); it reads RQKKRGIFPK…NARRRIVQPM (63 aa). The segment at 299–333 is interaction with DNA; the sequence is LTHPYPSEEQKKQLAQDTGLTILQVNNWFINARRR. The tract at residues 340 to 477 is transcriptional activation domain; it reads DQSNRAGFLL…GGQVMDIHAQ (138 aa).

Belongs to the TALE/MEIS homeobox family. Monomer and homodimer. Heterodimer with HOXB13. Isoform 2 interacts with TLX1. Isoform 3 interacts with HOXA13 and PBX1 isoform PBX1b. Isoform 4 interacts with SP1, SP3 and KLF4. Isoform 4 and isoform 5 interact with PBX1 isoform PBX1a; the interaction partially relieves MEIS2 autoinhibition. Isoform 3 also known as MEIS2b is part of a PDX1:PBX1b:Meis2B complex; Meis2B is recruited by PBX1b and can be replaced by isoform 4 in a small fraction of complexes. Can form trimeric complexes including HOXB8 and PBX2 or PBX3. Expressed in various tissues. Expressed at high level in the lymphoid organs of hematopoietic tissues. Also expressed in some regions of the brain, such as the putamen.

It is found in the nucleus. The protein localises to the cytoplasm. The protein resides in the perinuclear region. Its function is as follows. Involved in transcriptional regulation. Binds to HOX or PBX proteins to form dimers, or to a DNA-bound dimer of PBX and HOX proteins and thought to have a role in stabilization of the homeoprotein-DNA complex. Isoform 3 is required for the activity of a PDX1:PBX1b:MEIS2b complex in pancreatic acinar cells involved in the transcriptional activation of the ELA1 enhancer; the complex binds to the enhancer B element and cooperates with the transcription factor 1 complex (PTF1) bound to the enhancer A element; MEIS2 is not involved in complex DNA-binding. Probably in complex with PBX1, is involved in transcriptional regulation by KLF4. Isoform 3 and isoform 4 can bind to a EPHA8 promoter sequence containing the DNA motif 5'-CGGTCA-3'; in cooperation with a PBX protein (such as PBX2) is proposed to be involved in the transcriptional activation of EPHA8 in the developing midbrain. May be involved in regulation of myeloid differentiation. Can bind to the DNA sequence 5'-TGACAG-3'in the activator ACT sequence of the D(1A) dopamine receptor (DRD1) promoter and activate DRD1 transcription; isoform 5 cannot activate DRD1 transcription. The sequence is that of Homeobox protein Meis2 (MEIS2) from Homo sapiens (Human).